Reading from the N-terminus, the 463-residue chain is MVKNMDTIVQLAKHRGFVFPGSDIYGGLSNTWDYGPLGVELKNNIKKAWWQKFITQSPYNVGIDAAILMNPKTWEASGHLGNFNDPMIDNKDSKIRYRADKLIEDYMQNEKGDENFIADGLSFDEMKKIIDDEGIVCPVSKTANWTDIRQFNLMFKTFQGVTEDSTNELFLRPETAQGIFVNYKNVQRSMRKKLPFGIGQIGKSFRNEITPGNFIFRTREFEQMELEFFCKPGEEIEWQNYWKTFASEWLTDLNISEDNMRLRDHDEDELSHYSNATTDIEYKFPFGWGELWGIASRTDYDLRQHSEHSGEDFKYHDPETNEKYIPYCIEPSLGADRVTLAFLCDAYAEEGVEGSKDARTVMHFHPALAPYKAAVLPLSKKLSSEAIKIFEQLSSSFAIDFDESQSIGKRYRRQDEIGTPYCITFDFDSLEDNQVTVRDRDSMEQVRMPISELETFLAEKVKF.

Substrate contacts are provided by Arg98 and Glu174. Residues 206 to 208, 216 to 221, 290 to 291, and 334 to 337 contribute to the ATP site; these read RNE, FRTREF, EL, and GADR. 221-225 contacts substrate; it reads FEQME. 330-334 lines the substrate pocket; it reads EPSLG.

This sequence belongs to the class-II aminoacyl-tRNA synthetase family. In terms of assembly, homodimer.

It localises to the cytoplasm. The catalysed reaction is tRNA(Gly) + glycine + ATP = glycyl-tRNA(Gly) + AMP + diphosphate. Its function is as follows. Catalyzes the attachment of glycine to tRNA(Gly). This is Glycine--tRNA ligase from Staphylococcus epidermidis (strain ATCC 35984 / DSM 28319 / BCRC 17069 / CCUG 31568 / BM 3577 / RP62A).